We begin with the raw amino-acid sequence, 249 residues long: MADS-box transcription factor 7 (249 aa).

Positions 1 to 61 (MGRGRVELKR…GKLYEFCSTQ (61 aa)) constitute an MADS-box domain. Residues 90 to 180 (LKASRNEYLK…RRKLEESNHV (91 aa)) form the K-box domain.

In terms of assembly, may interact with the K-box of MADS6. May interact with MADS13 and MADS18. Expressed in lodicules, stamens and carpels.

It localises to the nucleus. Functionally, probable transcription factor. May be involved in the control of flowering time. The sequence is that of MADS-box transcription factor 7 (MADS7) from Oryza sativa subsp. japonica (Rice).